A 155-amino-acid polypeptide reads, in one-letter code: uncharacterized protein (155 aa).

The N-terminal stretch at 1–24 is a signal peptide; the sequence is MQQLSKRRLSALFVTAFLPVTAFA.

This is an uncharacterized protein from Chromohalobacter salexigens (strain ATCC BAA-138 / DSM 3043 / CIP 106854 / NCIMB 13768 / 1H11).